Reading from the N-terminus, the 730-residue chain is ATP-binding cassette sub-family D member 1 (730 aa).

A run of 4 helical transmembrane segments spans residues 24-44 (AFSYALVTSAILALTIKVTIP), 137-157 (FCLISRTFLSIYVAALEGALV), 169-189 (ALVLLKWFGIAIPATFVNSMI), and 276-296 (ANIITGPALSIGVIALTAHIL). The ABC transmembrane type-1 domain occupies 136–373 (TFCLISRTFL…WFIMLEQFFM (238 aa)). Residues 505-727 (ISLRAVPVVT…MNSDEEQKGQ (223 aa)) enclose the ABC transporter domain. 538-545 (GPNGCGKS) serves as a coordination point for ATP.

This sequence belongs to the ABC transporter superfamily. ABCD family. Peroxisomal fatty acyl CoA transporter (TC 3.A.1.203) subfamily.

It localises to the peroxisome membrane. It catalyses the reaction an acyl-CoA(out) + ATP + H2O = an acyl-CoA(in) + ADP + phosphate + H(+). Plays a role in the transport of free very-long-chain fatty acids (VLCFAs) as well as their CoA-esters across the peroxisomal membrane by acting as an ATP-specific binding subunit releasing ADP after ATP hydrolysis. Thus, plays a role in regulation of VLCFAs and energy metabolism namely, in the degradation and biosynthesis of fatty acids by beta-oxidation, mitochondrial function and microsomal fatty acid elongation. This chain is ATP-binding cassette sub-family D member 1, found in Drosophila melanogaster (Fruit fly).